The following is a 241-amino-acid chain: RecQ-mediated genome instability protein 1 (241 aa).

This sequence belongs to the RMI1 family. Forms a complex with SGS1 and TOP3.

The protein localises to the cytoplasm. Its subcellular location is the nucleus. Functionally, structure-specific DNA-binding protein with a preference for cruciform structures. Also binds single-stranded DNA (ssDNA). Functions together with SGS1 and TOP3 to maintain genome integrity. Essential for proper meiotic cell division. Required for normal S-phase progression and DNA damage response. Required for resistance to the DNA-damaging agent methyl methanesulfonate (MMS). The chain is RecQ-mediated genome instability protein 1 from Saccharomyces cerevisiae (strain ATCC 204508 / S288c) (Baker's yeast).